Reading from the N-terminus, the 326-residue chain is Aldo-keto reductase family 1 member D1 (326 aa).

Residues 22–26 and Asp53 contribute to the NADP(+) site; that span reads GLGTY. Substrate is bound at residue Tyr26. The substrate site is built by Tyr58, Trp89, Glu120, and Tyr132. Tyr58 (proton donor) is an active-site residue. NADP(+)-binding positions include 169–170, Gln193, and 219–224; these read SN and YSPLGT. Trp230 provides a ligand contact to substrate. NADP(+) is bound at residue 273–283; it reads KSFNPERIKEN.

The protein belongs to the aldo/keto reductase family.

It is found in the cytoplasm. The catalysed reaction is 5beta-cholestan-3-one + NADP(+) = cholest-4-en-3-one + NADPH + H(+). The enzyme catalyses 4,5beta-dihydrocortisone + NADP(+) = cortisone + NADPH + H(+). It catalyses the reaction cortisol + NADPH + H(+) = 5beta-dihydrocortisol + NADP(+). It carries out the reaction corticosterone + NADPH + H(+) = 5beta-dihydrocorticosterone + NADP(+). The catalysed reaction is 7alpha,12alpha-dihydroxycholest-4-en-3-one + NADPH + H(+) = 7alpha,12alpha-dihydroxy-5beta-cholestan-3-one + NADP(+). The enzyme catalyses 7alpha-hydroxycholest-4-en-3-one + NADPH + H(+) = 7alpha-hydroxy-5beta-cholestan-3-one + NADP(+). It catalyses the reaction epitestosterone + NADPH + H(+) = 5beta-dihydroepitestosterone + NADP(+). It carries out the reaction androst-4-ene-3,17-dione + NADPH + H(+) = 5beta-androstane-3,17-dione + NADP(+). The catalysed reaction is progesterone + NADPH + H(+) = 5beta-pregnan-3,20-dione + NADP(+). The enzyme catalyses 21-hydroxyprogesterone + NADPH + H(+) = 5beta-dihydrodeoxycorticosterone + NADP(+). It catalyses the reaction aldosterone + NADPH + H(+) = 5beta-dihydroaldosterone + NADP(+). It carries out the reaction 17beta-hydroxyandrosta-1,4-dien-3-one + NADPH + H(+) = 17beta-hydroxy-5beta-androst-1-en-3-one + NADP(+). The catalysed reaction is 17beta-hydroxyestr-4-en-3-one + NADPH + H(+) = 17beta-hydroxy-5beta-estran-3-one + NADP(+). The enzyme catalyses 5beta-dihydrotestosterone + NADP(+) = testosterone + NADPH + H(+). It catalyses the reaction androst-4-ene-3,11,17-trione + NADPH + H(+) = 17beta-hydroxyandrost-4-ene-3,11-dione + NADP(+). Its activity is regulated as follows. Subject to inhibition by high substrate concentrations. Inhibited by testosterone concentrations above 10 uM. Inhibited by the primary and secondary bile acids chenodeoxycholic acid and ursodeoxycholic acid. Its function is as follows. Catalyzes the stereospecific NADPH-dependent reduction of the C4-C5 double bond of bile acid intermediates and steroid hormones carrying a delta(4)-3-one structure to yield an A/B cis-ring junction. This cis-configuration is crucial for bile acid biosynthesis and plays important roles in steroid metabolism. Capable of reducing a broad range of delta-(4)-3-ketosteroids from C18 (such as, 17beta-hydroxyestr-4-en-3-one) to C27 (such as, 7alpha-hydroxycholest-4-en-3-one). The sequence is that of Aldo-keto reductase family 1 member D1 (AKR1D1) from Oryctolagus cuniculus (Rabbit).